A 478-amino-acid chain; its full sequence is Glycogen synthase (478 aa).

Lys20 contacts ADP-alpha-D-glucose.

Belongs to the glycosyltransferase 1 family. Bacterial/plant glycogen synthase subfamily.

The enzyme catalyses [(1-&gt;4)-alpha-D-glucosyl](n) + ADP-alpha-D-glucose = [(1-&gt;4)-alpha-D-glucosyl](n+1) + ADP + H(+). It participates in glycan biosynthesis; glycogen biosynthesis. In terms of biological role, synthesizes alpha-1,4-glucan chains using ADP-glucose. The protein is Glycogen synthase of Cereibacter sphaeroides (strain ATCC 17023 / DSM 158 / JCM 6121 / CCUG 31486 / LMG 2827 / NBRC 12203 / NCIMB 8253 / ATH 2.4.1.) (Rhodobacter sphaeroides).